The primary structure comprises 467 residues: Chromosomal replication initiator protein DnaA (467 aa).

The segment at 1–90 (MSLSLWQQCL…KSVTQTPQAA (90 aa)) is domain I, interacts with DnaA modulators. The tract at residues 91-130 (VTSNVAAPAQVAQTQPQRAAPSTRSGWDNVPAPAEPTYRS) is domain II. Positions 97-111 (APAQVAQTQPQRAAP) are enriched in low complexity. The tract at residues 97–119 (APAQVAQTQPQRAAPSTRSGWDN) is disordered. The domain III, AAA+ region stretch occupies residues 131-347 (NVNVKHTFDN…GALNRVIANA (217 aa)). The ATP site is built by G175, G177, K178, and T179. The tract at residues 348 to 467 (NFTGRAITID…FSNLIRTLSS (120 aa)) is domain IV, binds dsDNA.

Belongs to the DnaA family. As to quaternary structure, oligomerizes as a right-handed, spiral filament on DNA at oriC.

The protein resides in the cytoplasm. Functionally, plays an essential role in the initiation and regulation of chromosomal replication. ATP-DnaA binds to the origin of replication (oriC) to initiate formation of the DNA replication initiation complex once per cell cycle. Binds the DnaA box (a 9 base pair repeat at the origin) and separates the double-stranded (ds)DNA. Forms a right-handed helical filament on oriC DNA; dsDNA binds to the exterior of the filament while single-stranded (ss)DNA is stabiized in the filament's interior. The ATP-DnaA-oriC complex binds and stabilizes one strand of the AT-rich DNA unwinding element (DUE), permitting loading of DNA polymerase. After initiation quickly degrades to an ADP-DnaA complex that is not apt for DNA replication. Binds acidic phospholipids. The polypeptide is Chromosomal replication initiator protein DnaA (Escherichia coli O157:H7).